We begin with the raw amino-acid sequence, 97 residues long: Exodeoxyribonuclease 7 small subunit (97 aa).

Positions 1-22 are disordered; that stretch reads MAKTASPGATPPDNGTEPLPDN.

This sequence belongs to the XseB family. Heterooligomer composed of large and small subunits.

It localises to the cytoplasm. The catalysed reaction is Exonucleolytic cleavage in either 5'- to 3'- or 3'- to 5'-direction to yield nucleoside 5'-phosphates.. Functionally, bidirectionally degrades single-stranded DNA into large acid-insoluble oligonucleotides, which are then degraded further into small acid-soluble oligonucleotides. This chain is Exodeoxyribonuclease 7 small subunit, found in Burkholderia ambifaria (strain MC40-6).